The primary structure comprises 455 residues: Angiopoietin-related protein 3 (455 aa).

The signal sequence occupies residues 1-16 (MHTIKLFLFVVPLVIA). The sufficient to inhibit LPL lipase activity stretch occupies residues 17-165 (SRVDPDLSSF…QEHPEVTSLK (149 aa)). Residues 17–207 (SRVDPDLSSF…EIEKQLRKTG (191 aa)) form a sufficient to inhibit LIPG/EL phospholipase activity region. Residues 32-56 (EPKSRFAMLDDVKILANGLLQLGHG) form a required for inhibition of LPL lipase activity region. Residues 85–206 (LSLRTNEIKE…KEIEKQLRKT (122 aa)) adopt a coiled-coil conformation. Asn115 is a glycosylation site (N-linked (GlcNAc...) asparagine). The tract at residues 202-242 (QLRKTGIQEPSENSLSSKSRAPRTTPPLQLNETENTEQDDL) is disordered. The span at 209 to 220 (QEPSENSLSSKS) shows a compositional bias: polar residues. A glycan (O-linked (GlcNAc) threonine) is linked at Thr226. Asn232 carries N-linked (GlcNAc...) asparagine glycosylation. Residues 237–455 (TEQDDLPADC…SSKMMLQPTT (219 aa)) enclose the Fibrinogen C-terminal domain. Residues Cys246 and Cys274 are joined by a disulfide bond. N-linked (GlcNAc...) asparagine glycans are attached at residues Asn296 and Asn357. Residues Cys394 and Cys408 are joined by a disulfide bond.

As to quaternary structure, interacts with ANGPTL8. Interacts with ITGB3. Post-translationally, in part proteolytically cleaved by proprotein convertases; proposed to be involved in activation. In primary hepatocytes is intracellularily predominantly processed by FURIN and extracellularily by FURIN and PCSK6/PACE4. In 18.5 dpc embryos 75% of protein is found to be processed compared to 25 % in adults. Predominantly expressed in liver, weakly expressed in kidney and lung. Expressed in podocytes (at protein level). Expressed in hypothalamic neurons (at protein level). Expressed in bone marrow sinusoidal endothelial cells (at protein level).

The protein resides in the secreted. Its subcellular location is the cell projection. It localises to the lamellipodium. Acts in part as a hepatokine that is involved in regulation of lipid and glucose metabolism. Proposed to play a role in the trafficking of energy substrates to either storage or oxidative tissues in response to food intake. Has a stimulatory effect on plasma triglycerides (TG), which is achieved by suppressing plasma TG clearance via inhibition of LPL activity; the function seems to be specific for the feeding conditions. The inhibition of LPL activity appears to be an indirect mechanism involving recruitment of proprotein convertases PCSK6 and FURIN to LPL leading to cleavage and dissociation of LPL from the cell surface; the function does not require ANGPTL3 proteolytic cleavage but seems to be mediated by the N-terminal domain, and is not inhibited by GPIHBP1. Can inhibit endothelial lipase, causing increased plasma levels of high density lipoprotein (HDL) cholesterol and phospholipids; the cleaved N-terminal domain is more efficient than the uncleaved proprotein. Can bind to adipocytes to activate lipolysis, releasing free fatty acids and glycerol. Suppresses LPL specifically in oxidative tissues which is required to route very low density lipoprotein (VLDL)-TG to white adipose tissue (WAT) for storage in response to food; the function may involve cooperation with circulating, liver-derived ANGPTL8 and ANGPTL4 expression in WAT. Contributes to lower plasma levels of low density lipoprotein (LDL)-cholesterol by a mechanism that is independent of the canonical pathway implicating APOE and LDLR. May stimulate hypothalamic LPL activity. Its function is as follows. Involved in angiogenesis. Binds to endothelial cells via integrin alpha-V/beta-3 (ITGAV:ITGB3), activates FAK, MAPK and Akt signaling pathways and induces cell adhesion and cell migration. May increase the motility of podocytes. Secreted from podocytes, may modulate properties of glomerular endothelial cells involving integrin alpha-V/beta-3 and Akt signaling. May induce actin filament rearrangements in podocytes implicating integrin alpha-V/beta-3 and Rac1 activation. Binds to hematopoietic stem cells (HSC) and is involved in the regulation of HSC activity probably implicating down-regulation of IKZF1/IKAROS. This is Angiopoietin-related protein 3 (Angptl3) from Mus musculus (Mouse).